Consider the following 591-residue polypeptide: L-fucose isomerase (591 aa).

Catalysis depends on proton acceptor residues glutamate 337 and aspartate 361. The Mn(2+) site is built by glutamate 337, aspartate 361, and histidine 528.

This sequence belongs to the L-fucose isomerase family. As to quaternary structure, homohexamer. Mn(2+) is required as a cofactor.

It localises to the cytoplasm. It carries out the reaction L-fucose = L-fuculose. It functions in the pathway carbohydrate degradation; L-fucose degradation; L-lactaldehyde and glycerone phosphate from L-fucose: step 1/3. Its function is as follows. Converts the aldose L-fucose into the corresponding ketose L-fuculose. This Escherichia coli (strain UTI89 / UPEC) protein is L-fucose isomerase.